Reading from the N-terminus, the 318-residue chain is tRNA uridine(34) hydroxylase (318 aa).

The region spanning glutamate 123–glutamine 217 is the Rhodanese domain. Residue cysteine 177 is the Cysteine persulfide intermediate of the active site.

Belongs to the TrhO family.

It carries out the reaction uridine(34) in tRNA + AH2 + O2 = 5-hydroxyuridine(34) in tRNA + A + H2O. Catalyzes oxygen-dependent 5-hydroxyuridine (ho5U) modification at position 34 in tRNAs. In Staphylococcus aureus (strain bovine RF122 / ET3-1), this protein is tRNA uridine(34) hydroxylase.